Reading from the N-terminus, the 148-residue chain is Snaclec B3/B5 (148 aa).

A signal peptide spans 1 to 24 (MGRFIFVSFGLLVVFLSLSGTGAA). 3 cysteine pairs are disulfide-bonded: Cys27–Cys38, Cys55–Cys144, and Cys121–Cys136. Residues 34-145 (YDQHCYKVFD…CRLLGHFVCK (112 aa)) form the C-type lectin domain.

This sequence belongs to the snaclec family. In terms of assembly, heterodimer; disulfide-linked. As to expression, expressed by the venom gland.

The protein resides in the secreted. In terms of biological role, interferes with one step of hemostasis (modulation of platelet aggregation, or coagulation cascade, for example). In Macrovipera lebetinus (Levantine viper), this protein is Snaclec B3/B5.